The primary structure comprises 397 residues: MERFKKASSIIETLKQQGHEAYFVGGSVRDLIIDRPIGDIDIATSALPEEVMAIFPRHVPVGLEHGTVIVVENGEPYEVTTFRTESEYEDFRRPSSVQFVRSLEEDLKRRDFTMNAIAMTEEGERIDLFAGQEAIQKREIVTVGTAADRFQEDALRMMRGIRFVSTLGFSLETKTKQAIETYGHLLEHIAIERITVEFEKLLTGTYCVKGLKELVETKLFSHLPYLQMSEERLLKATQYNWDSFETDIEAWAFFLYCIGEEHPSVFLRQWKFSNKKIKDIVAVLLTIRKRKEKDWDTVLLYKTGIHIAEMAERVYEAMIESYDHTSVERVQTLFQALPIKSRQEMDVTGNDLLNWASKKPGPWVAEMIQKIEEAIVQGNVVNEKECIREWLQECNLL.

2 residues coordinate ATP: Gly-26 and Arg-29. Residues Gly-26 and Arg-29 each coordinate CTP. Residues Asp-39 and Asp-41 each contribute to the Mg(2+) site. The ATP site is built by Arg-110, Asp-153, Arg-156, Arg-159, and Arg-162. Residues Arg-110, Asp-153, Arg-156, Arg-159, and Arg-162 each contribute to the CTP site.

The protein belongs to the tRNA nucleotidyltransferase/poly(A) polymerase family. Bacterial CCA-adding enzyme type 3 subfamily. In terms of assembly, homodimer. Mg(2+) is required as a cofactor.

The enzyme catalyses a tRNA precursor + 2 CTP + ATP = a tRNA with a 3' CCA end + 3 diphosphate. It carries out the reaction a tRNA with a 3' CCA end + 2 CTP + ATP = a tRNA with a 3' CCACCA end + 3 diphosphate. Its function is as follows. Catalyzes the addition and repair of the essential 3'-terminal CCA sequence in tRNAs without using a nucleic acid template. Adds these three nucleotides in the order of C, C, and A to the tRNA nucleotide-73, using CTP and ATP as substrates and producing inorganic pyrophosphate. tRNA 3'-terminal CCA addition is required both for tRNA processing and repair. Also involved in tRNA surveillance by mediating tandem CCA addition to generate a CCACCA at the 3' terminus of unstable tRNAs. While stable tRNAs receive only 3'-terminal CCA, unstable tRNAs are marked with CCACCA and rapidly degraded. The polypeptide is CCA-adding enzyme (Bacillus cereus (strain ZK / E33L)).